The primary structure comprises 285 residues: S-methyl-5'-thioadenosine phosphorylase (285 aa).

Phosphate-binding positions include Ser-10, 52 to 53 (RH), and 85 to 86 (TA). Met-188 is a binding site for substrate. Thr-189 is a binding site for phosphate. Residue 212-214 (DYD) participates in substrate binding.

The protein belongs to the PNP/MTAP phosphorylase family. MTAP subfamily. As to quaternary structure, homotrimer.

The protein resides in the cytoplasm. It is found in the nucleus. The catalysed reaction is S-methyl-5'-thioadenosine + phosphate = 5-(methylsulfanyl)-alpha-D-ribose 1-phosphate + adenine. Its pathway is amino-acid biosynthesis; L-methionine biosynthesis via salvage pathway; S-methyl-5-thio-alpha-D-ribose 1-phosphate from S-methyl-5'-thioadenosine (phosphorylase route): step 1/1. Its function is as follows. Catalyzes the reversible phosphorylation of S-methyl-5'-thioadenosine (MTA) to adenine and 5-methylthioribose-1-phosphate. Involved in the breakdown of MTA, a major by-product of polyamine biosynthesis. Responsible for the first step in the methionine salvage pathway after MTA has been generated from S-adenosylmethionine. Has broad substrate specificity with 6-aminopurine nucleosides as preferred substrates. This is S-methyl-5'-thioadenosine phosphorylase from Caenorhabditis briggsae.